We begin with the raw amino-acid sequence, 139 residues long: D-ribose pyranase (139 aa).

The Proton donor role is filled by His20. Substrate is bound by residues Asp28, His106, and 128–130; that span reads FAN.

Belongs to the RbsD / FucU family. RbsD subfamily. In terms of assembly, homodecamer.

It localises to the cytoplasm. It catalyses the reaction beta-D-ribopyranose = beta-D-ribofuranose. Its pathway is carbohydrate metabolism; D-ribose degradation; D-ribose 5-phosphate from beta-D-ribopyranose: step 1/2. Functionally, catalyzes the interconversion of beta-pyran and beta-furan forms of D-ribose. The polypeptide is D-ribose pyranase (Yersinia pseudotuberculosis serotype O:1b (strain IP 31758)).